An 87-amino-acid chain; its full sequence is Toxin ICK-42 (87 aa).

The signal sequence occupies residues 1–19 (MKPIVYMLLFCAFTVVILG). Intrachain disulfides connect Cys40–Cys54, Cys40–Cys77, Cys53–Cys66, and Cys80–Cys87.

This sequence belongs to the neurotoxin 27 (Jztx-72) family. ICK-41 subfamily. As to expression, expressed by the venom gland.

Its subcellular location is the secreted. Functionally, probable neurotoxin with ion channel impairing activity. This is Toxin ICK-42 from Trittame loki (Brush-footed trapdoor spider).